The chain runs to 437 residues: Trigger factor (437 aa).

Residues 163-248 (DDRVTVDFEG…VKKIEASHLP (86 aa)) form the PPIase FKBP-type domain.

This sequence belongs to the FKBP-type PPIase family. Tig subfamily.

It is found in the cytoplasm. It catalyses the reaction [protein]-peptidylproline (omega=180) = [protein]-peptidylproline (omega=0). Functionally, involved in protein export. Acts as a chaperone by maintaining the newly synthesized protein in an open conformation. Functions as a peptidyl-prolyl cis-trans isomerase. The polypeptide is Trigger factor (Variovorax paradoxus (strain S110)).